We begin with the raw amino-acid sequence, 194 residues long: dCTP deaminase (194 aa).

DCTP is bound by residues 110–115 (RSSLAR), Asp-128, 136–138 (VLE), Tyr-171, Lys-178, and Gln-182. The Proton donor/acceptor role is filled by Glu-138. The tract at residues 171–194 (YNKRKNAKYKDQQEAVASRISQDS) is disordered.

This sequence belongs to the dCTP deaminase family. Homotrimer.

The catalysed reaction is dCTP + H2O + H(+) = dUTP + NH4(+). It participates in pyrimidine metabolism; dUMP biosynthesis; dUMP from dCTP (dUTP route): step 1/2. Functionally, catalyzes the deamination of dCTP to dUTP. This chain is dCTP deaminase, found in Shewanella amazonensis (strain ATCC BAA-1098 / SB2B).